Consider the following 238-residue polypeptide: 1-(5-phosphoribosyl)-5-[(5-phosphoribosylamino)methylideneamino] imidazole-4-carboxamide isomerase (238 aa).

The Proton acceptor role is filled by aspartate 8. Aspartate 129 (proton donor) is an active-site residue.

The protein belongs to the HisA/HisF family.

The protein localises to the cytoplasm. It carries out the reaction 1-(5-phospho-beta-D-ribosyl)-5-[(5-phospho-beta-D-ribosylamino)methylideneamino]imidazole-4-carboxamide = 5-[(5-phospho-1-deoxy-D-ribulos-1-ylimino)methylamino]-1-(5-phospho-beta-D-ribosyl)imidazole-4-carboxamide. Its pathway is amino-acid biosynthesis; L-histidine biosynthesis; L-histidine from 5-phospho-alpha-D-ribose 1-diphosphate: step 4/9. This is 1-(5-phosphoribosyl)-5-[(5-phosphoribosylamino)methylideneamino] imidazole-4-carboxamide isomerase from Clostridium kluyveri (strain NBRC 12016).